The sequence spans 750 residues: MWNLLHETDSAVATARRPRWLCAGALVLAGGFFLLGFLFGWFIKSSNEATNITPKHNMKAFLDELKAENIKKFLYNFTQIPHLAGTEQNFQLAKQIQSQWKEFGLDSVELAHYDVLLSYPNKTHPNYISIINEDGNEIFNTSLFEPPPPGYENVSDIVPPFSAFSPQGMPEGDLVYVNYARTEDFFKLERDMKINCSGKIVIARYGKVFRGNKVKNAQLAGAKGVILYSDPADYFAPGVKSYPDGWNLPGGGVQRGNILNLNGAGDPLTPGYPANEYAYRRGIAEAVGLPSIPVHPIGYYDAQKLLEKMGGSAPPDSSWRGSLKVPYNVGPGFTGNFSTQKVKMHIHSTNEVTRIYNVIGTLRGAVEPDRYVILGGHRDSWVFGGIDPQSGAAVVHEIVRSFGTLKKEGWRPRRTILFASWDAEEFGLLGSTEWAEENSRLLQERGVAYINADSSIEGNYTLRVDCTPLMYSLVHNLTKELKSPDEGFEGKSLYESWTKKSPSPEFSGMPRISKLGSGNDFEVFFQRLGIASGRARYTKNWETNKFSGYPLYHSVYETYELVEKFYDPMFKYHLTVAQVRGGMVFELANSIVLPFDCRDYAVVLRKYADKIYSISMKHPQEMKTYSVSFDSLFSAVKNFTEIASKFSERLQDFDKSNPIVLRMMNDQLMFLERAFIDPLGLPDRPFYRHVIYAPSSHNKYAGESFPGIYDALFDIESKVDPSKAWGEVKRQIYVAAFTVQAAAETLSEVA.

At 1–19 (MWNLLHETDSAVATARRPR) the chain is on the cytoplasmic side. A Phosphoserine modification is found at S10. Residues 20-43 (WLCAGALVLAGGFFLLGFLFGWFI) traverse the membrane as a helical; Signal-anchor for type II membrane protein segment. Topologically, residues 44-750 (KSSNEATNIT…AAAETLSEVA (707 aa)) are extracellular. N-linked (GlcNAc...) asparagine glycosylation is found at N51, N76, N121, N140, N153, and N195. Residues R210 and N257 each coordinate substrate. Ca(2+) contacts are provided by T269 and Y272. The interval 274-587 (ANEYAYRRGI…QVRGGMVFEL (314 aa)) is NAALADase. An N-linked (GlcNAc...) asparagine glycan is attached at N336. Zn(2+)-binding residues include H377 and D387. Residue E424 coordinates substrate. E424 acts as the Nucleophile; for NAALADase activity in catalysis. Residue E425 participates in Zn(2+) binding. The Ca(2+) site is built by E433 and E436. Residue D453 coordinates Zn(2+). 2 N-linked (GlcNAc...) asparagine glycosylation sites follow: N459 and N476. Residues 517–518 (SG), N519, 534–536 (RAR), Y552, and 552–553 (YH) contribute to the substrate site. H553 is a Zn(2+) binding site. S628 (charge relay system) is an active-site residue. Residue N638 is glycosylated (N-linked (GlcNAc...) asparagine). Residues D666 and H689 each act as charge relay system in the active site. 699–700 (KY) is a substrate binding site.

The protein belongs to the peptidase M28 family. M28B subfamily. As to quaternary structure, homodimer. The cofactor is Zn(2+). In terms of processing, the first two amino acids at the N-terminus of isoform PSMA' appear to be cleaved by limited proteolysis. Post-translationally, the N-terminus is blocked. In terms of tissue distribution, highly expressed in prostate epithelium. Detected in urinary bladder, kidney, testis, ovary, fallopian tube, breast, adrenal gland, liver, esophagus, stomach, small intestine, colon and brain (at protein level). Detected in the small intestine, brain, kidney, liver, spleen, colon, trachea, spinal cord and the capillary endothelium of a variety of tumors. Expressed specifically in jejunum brush border membranes. In the brain, highly expressed in the ventral striatum and brain stem. Also expressed in fetal liver and kidney. Isoform PSMA' is the most abundant form in normal prostate. Isoform PSMA-1 is the most abundant form in primary prostate tumors. Isoform PSMA-9 is specifically expressed in prostate cancer.

The protein localises to the cell membrane. It localises to the cytoplasm. It carries out the reaction Release of an unsubstituted, C-terminal glutamyl residue, typically from Ac-Asp-Glu or folylpoly-gamma-glutamates.. Its activity is regulated as follows. The NAALADase activity is inhibited by beta-NAAG, quisqualic acid, 2-(phosphonomethyl) pentanedioic acid (PMPA) and EDTA. Activated by cobalt. Its function is as follows. Has both folate hydrolase and N-acetylated-alpha-linked-acidic dipeptidase (NAALADase) activity. Has a preference for tri-alpha-glutamate peptides. In the intestine, required for the uptake of folate. In the brain, modulates excitatory neurotransmission through the hydrolysis of the neuropeptide, N-aceylaspartylglutamate (NAAG), thereby releasing glutamate. Involved in prostate tumor progression. In terms of biological role, also exhibits a dipeptidyl-peptidase IV type activity. In vitro, cleaves Gly-Pro-AMC. The sequence is that of Glutamate carboxypeptidase 2 from Homo sapiens (Human).